Reading from the N-terminus, the 243-residue chain is Probable transcriptional regulatory protein PTH_1024 (243 aa).

This sequence belongs to the TACO1 family.

Its subcellular location is the cytoplasm. This is Probable transcriptional regulatory protein PTH_1024 from Pelotomaculum thermopropionicum (strain DSM 13744 / JCM 10971 / SI).